The primary structure comprises 279 residues: Putative expansin-A26 (279 aa).

The N-terminal stretch at 1–27 (MKLLEKMIYVEFLMIIMAMWVVPMSYG) is a signal peptide. An Expansin-like EG45 domain is found at 76–186 (QGACGYGNLF…RRIPCSKTGG (111 aa)). Residues 196 to 275 (YFLMVLIYNV…NWGFGQTFDG (80 aa)) enclose the Expansin-like CBD domain.

The protein belongs to the expansin family. Expansin A subfamily.

It localises to the secreted. Its subcellular location is the cell wall. It is found in the membrane. In terms of biological role, causes loosening and extension of plant cell walls by disrupting non-covalent bonding between cellulose microfibrils and matrix glucans. No enzymatic activity has been found. The polypeptide is Putative expansin-A26 (EXPA26) (Arabidopsis thaliana (Mouse-ear cress)).